A 431-amino-acid chain; its full sequence is Adenylosuccinate synthetase (431 aa).

GTP contacts are provided by residues 13–19 and 41–43; these read GDEGKGK and GHT. The Proton acceptor role is filled by aspartate 14. The Mg(2+) site is built by aspartate 14 and glycine 41. IMP contacts are provided by residues 14–17, 39–42, threonine 130, arginine 144, glutamine 225, threonine 240, and arginine 304; these read DEGK and NAGH. Histidine 42 (proton donor) is an active-site residue. Substrate is bound at residue 300 to 306; sequence ATTGRKR. GTP is bound by residues arginine 306, 332–334, and 415–417; these read KLD and STG.

It belongs to the adenylosuccinate synthetase family. In terms of assembly, homodimer. Mg(2+) serves as cofactor.

The protein localises to the cytoplasm. It carries out the reaction IMP + L-aspartate + GTP = N(6)-(1,2-dicarboxyethyl)-AMP + GDP + phosphate + 2 H(+). It functions in the pathway purine metabolism; AMP biosynthesis via de novo pathway; AMP from IMP: step 1/2. In terms of biological role, plays an important role in the de novo pathway of purine nucleotide biosynthesis. Catalyzes the first committed step in the biosynthesis of AMP from IMP. The sequence is that of Adenylosuccinate synthetase from Shewanella amazonensis (strain ATCC BAA-1098 / SB2B).